A 278-amino-acid chain; its full sequence is NH(3)-dependent NAD(+) synthetase (278 aa).

39–46 provides a ligand contact to ATP; it reads GVSGGVDS. Aspartate 45 lines the Mg(2+) pocket. Deamido-NAD(+) is bound at residue arginine 121. Threonine 141 provides a ligand contact to ATP. Glutamate 146 lines the Mg(2+) pocket. Lysine 154 and aspartate 161 together coordinate deamido-NAD(+). 2 residues coordinate ATP: lysine 170 and serine 192. Position 252-253 (252-253) interacts with deamido-NAD(+); the sequence is HK.

It belongs to the NAD synthetase family. Homodimer.

The enzyme catalyses deamido-NAD(+) + NH4(+) + ATP = AMP + diphosphate + NAD(+) + H(+). Its pathway is cofactor biosynthesis; NAD(+) biosynthesis; NAD(+) from deamido-NAD(+) (ammonia route): step 1/1. Catalyzes the ATP-dependent amidation of deamido-NAD to form NAD. Uses ammonia as a nitrogen source. The chain is NH(3)-dependent NAD(+) synthetase from Saccharolobus solfataricus (strain ATCC 35092 / DSM 1617 / JCM 11322 / P2) (Sulfolobus solfataricus).